The chain runs to 175 residues: uncharacterized protein (175 aa).

An N-terminal signal peptide occupies residues 1 to 23; it reads MILVLLLILIAFLYIYFPSSLNQ.

This is an uncharacterized protein from Invertebrate iridescent virus 6 (IIV-6).